The primary structure comprises 310 residues: MTRHGKNSTAASVYTYHERRRDAKASGYGTLHARLGADSIKEFHCCSLTLQPCRNPVISPTGYIFDREAILENILAQKKAYAKKLKEYEKQVAEESAAAKIAEGQAETFTKRTQFSAIESTPSRTGAVATPRPEVGSLKRQGGVMSTEIAAKVKAHGEEGVMSNMKGDKSTSLPSFWIPELNPTAVATKLEKPSSKVLCPVSGKPIKLKELLEVKFTPMPGTETAAHRKFLCPVTRDELTNTTRCAYLKKSKSVVKYDVVEKLIKGDGIDPINGEPMSEDDIIELQRGGTGYSATNETKAKLIRPQLELQ.

The segment covering 115–124 (FSAIESTPSR) has biased composition (polar residues). The tract at residues 115 to 141 (FSAIESTPSRTGAVATPRPEVGSLKRQ) is disordered.

Belongs to the NOSIP family.

The protein resides in the cytoplasm. It localises to the nucleus. Functionally, negatively regulates nitric oxide production by inducing nitric oxide synthase translocation to actin cytoskeleton and inhibiting its enzymatic activity. The sequence is that of Nitric oxide synthase-interacting protein homolog from Caenorhabditis elegans.